Reading from the N-terminus, the 206-residue chain is Thymidylate kinase (206 aa).

11–18 (GIDGAGKT) contacts ATP.

This sequence belongs to the thymidylate kinase family.

The catalysed reaction is dTMP + ATP = dTDP + ADP. Its function is as follows. Phosphorylation of dTMP to form dTDP in both de novo and salvage pathways of dTTP synthesis. In Burkholderia mallei (strain NCTC 10247), this protein is Thymidylate kinase.